A 220-amino-acid chain; its full sequence is Deoxyribose-phosphate aldolase (220 aa).

D89 functions as the Proton donor/acceptor in the catalytic mechanism. K151 acts as the Schiff-base intermediate with acetaldehyde in catalysis. K180 acts as the Proton donor/acceptor in catalysis.

The protein belongs to the DeoC/FbaB aldolase family. DeoC type 1 subfamily.

It is found in the cytoplasm. The enzyme catalyses 2-deoxy-D-ribose 5-phosphate = D-glyceraldehyde 3-phosphate + acetaldehyde. Its pathway is carbohydrate degradation; 2-deoxy-D-ribose 1-phosphate degradation; D-glyceraldehyde 3-phosphate and acetaldehyde from 2-deoxy-alpha-D-ribose 1-phosphate: step 2/2. Functionally, catalyzes a reversible aldol reaction between acetaldehyde and D-glyceraldehyde 3-phosphate to generate 2-deoxy-D-ribose 5-phosphate. In Streptococcus gordonii (strain Challis / ATCC 35105 / BCRC 15272 / CH1 / DL1 / V288), this protein is Deoxyribose-phosphate aldolase.